Consider the following 1141-residue polypeptide: Myosin-binding protein C, slow-type (1141 aa).

Residues 1 to 10 (MPEPTKKEEN) are compositionally biased toward basic and acidic residues. The disordered stretch occupies residues 1–51 (MPEPTKKEENEVPAPAPPPEEPSKEKEAGTTPAKDWTLVETPPGEEQAKQN). 5 Ig-like C2-type domains span residues 72–144 (GEDI…RCEV), 251–340 (SAAF…VREP), 341–431 (PIMV…VDLK), 432–520 (PLKI…HVID), and 522–619 (PKII…VVDF). A Phosphothreonine modification is found at Thr-406. Ser-611 carries the phosphoserine modification. Fibronectin type-III domains are found at residues 622–721 (PPVA…TSPP) and 722–833 (TLLT…VKEI). Residue Thr-798 is modified to Phosphothreonine. Tyr-823 carries the post-translational modification Phosphotyrosine. The Ig-like C2-type 6 domain maps to 837–931 (PKIRIPRHLK…ASIDIQIIDR (95 aa)). Positions 934–1029 (PPQIVKIEDV…TKESAVIARD (96 aa)) constitute a Fibronectin type-III 3 domain. Residues 1047–1141 (PMFTQPLVNT…CKLEVKVIAQ (95 aa)) enclose the Ig-like C2-type 7 domain.

The protein belongs to the immunoglobulin superfamily. MyBP family. Interacts with USP25 (isoform USP25m only); the interaction prevents proteasomal degradation of MYBPC1.

Its function is as follows. Thick filament-associated protein located in the crossbridge region of vertebrate striated muscle a bands. Slow skeletal protein that binds to both myosin and actin. In vitro, binds to native thin filaments and modifies the activity of actin-activated myosin ATPase. May modulate muscle contraction or may play a more structural role. The protein is Myosin-binding protein C, slow-type (MYBPC1) of Homo sapiens (Human).